A 486-amino-acid polypeptide reads, in one-letter code: Probable peptidoglycan glycosyltransferase FtsW (486 aa).

Residues 1–50 (MAGAARDRAFLDHFGGAGADRPCHVEGALMNDMSRQATRLDAIGGRYDPW) lie on the Cytoplasmic side of the membrane. The chain crosses the membrane as a helical span at residues 51-71 (LLGAAVTLASLGVVMVASSSI). Topologically, residues 72–77 (ELEASP) are periplasmic. The chain crosses the membrane as a helical span at residues 78–98 (FYYLTRHLLFLGGGIALAFWA). Over 99–112 (MRTELKTIEQHNQM) the chain is Cytoplasmic. A helical transmembrane segment spans residues 113–133 (LLLACFVLLVVVFVPGLGSTV). The Periplasmic segment spans residues 134–141 (NGAKRWIN). The chain crosses the membrane as a helical span at residues 142-162 (LGVSRFQVVESVKVFYIIWLA). The Cytoplasmic segment spans residues 163-174 (SYLVRFRDEVNA). Residues 175 to 195 (TWQAMLKPVFVVGLLVGLLLL) form a helical membrane-spanning segment. The Periplasmic segment spans residues 196 to 199 (QPDF). The chain crosses the membrane as a helical span at residues 200–220 (GSSMLLLSVTACMLVLGGAPI). The Cytoplasmic segment spans residues 221 to 222 (GR). Residues 223–243 (IILPILLLLPALVALVIFEPY) traverse the membrane as a helical segment. Residues 244-298 (RMRRVTSFMDPWVDQLGSGYQLSNALMAIGRGQWTGVGLGASVQKLNYLPESHTD) are Periplasmic-facing. Residues 299-319 (FIFSVIAEELGFVGVCGVIGL) form a helical membrane-spanning segment. Over 320 to 342 (YALLVGRAFWLGMRCVEMKRHFS) the chain is Cytoplasmic. The helical transmembrane segment at 343–363 (GYIAFGIGLWIAMQSFVSIGV) threads the bilayer. The Periplasmic segment spans residues 364-374 (NLGILPTKGLT). A helical membrane pass occupies residues 375 to 395 (LPLISSGGSSVLMTCLAMGVL). Residues 396–486 (LRVSYEADRA…RVEPTFGRIA (91 aa)) lie on the Cytoplasmic side of the membrane.

It belongs to the SEDS family. FtsW subfamily.

Its subcellular location is the cell inner membrane. The enzyme catalyses [GlcNAc-(1-&gt;4)-Mur2Ac(oyl-L-Ala-gamma-D-Glu-L-Lys-D-Ala-D-Ala)](n)-di-trans,octa-cis-undecaprenyl diphosphate + beta-D-GlcNAc-(1-&gt;4)-Mur2Ac(oyl-L-Ala-gamma-D-Glu-L-Lys-D-Ala-D-Ala)-di-trans,octa-cis-undecaprenyl diphosphate = [GlcNAc-(1-&gt;4)-Mur2Ac(oyl-L-Ala-gamma-D-Glu-L-Lys-D-Ala-D-Ala)](n+1)-di-trans,octa-cis-undecaprenyl diphosphate + di-trans,octa-cis-undecaprenyl diphosphate + H(+). The protein operates within cell wall biogenesis; peptidoglycan biosynthesis. In terms of biological role, peptidoglycan polymerase that is essential for cell division. This chain is Probable peptidoglycan glycosyltransferase FtsW, found in Xanthomonas oryzae pv. oryzae (strain KACC10331 / KXO85).